The following is a 652-amino-acid chain: DNA ligase (652 aa).

NAD(+)-binding positions include 29-33 (DAEYD), 78-79 (SL), and E107. K109 serves as the catalytic N6-AMP-lysine intermediate. 4 residues coordinate NAD(+): R130, E164, K278, and K302. 4 residues coordinate Zn(2+): C395, C398, C413, and C418. A BRCT domain is found at 577-652 (ASDAALTGMT…IKDEAWLESL (76 aa)).

Belongs to the NAD-dependent DNA ligase family. LigA subfamily. Requires Mg(2+) as cofactor. The cofactor is Mn(2+).

The enzyme catalyses NAD(+) + (deoxyribonucleotide)n-3'-hydroxyl + 5'-phospho-(deoxyribonucleotide)m = (deoxyribonucleotide)n+m + AMP + beta-nicotinamide D-nucleotide.. DNA ligase that catalyzes the formation of phosphodiester linkages between 5'-phosphoryl and 3'-hydroxyl groups in double-stranded DNA using NAD as a coenzyme and as the energy source for the reaction. It is essential for DNA replication and repair of damaged DNA. The chain is DNA ligase from Streptococcus mutans serotype c (strain ATCC 700610 / UA159).